The following is a 313-amino-acid chain: Porphobilinogen deaminase (313 aa).

Cys242 is modified (S-(dipyrrolylmethanemethyl)cysteine).

The protein belongs to the HMBS family. In terms of assembly, monomer. Dipyrromethane serves as cofactor.

It catalyses the reaction 4 porphobilinogen + H2O = hydroxymethylbilane + 4 NH4(+). It participates in porphyrin-containing compound metabolism; protoporphyrin-IX biosynthesis; coproporphyrinogen-III from 5-aminolevulinate: step 2/4. Tetrapolymerization of the monopyrrole PBG into the hydroxymethylbilane pre-uroporphyrinogen in several discrete steps. In Escherichia fergusonii (strain ATCC 35469 / DSM 13698 / CCUG 18766 / IAM 14443 / JCM 21226 / LMG 7866 / NBRC 102419 / NCTC 12128 / CDC 0568-73), this protein is Porphobilinogen deaminase.